The following is a 440-amino-acid chain: MQAYFDQLDRVRYEGPKSTNPLAFRHYNPDELVLGKRMEDHLRFAACYWHTFCWNGADMFGVGSFDRPWQQPGEALELAKRKADVAFEFFHKLNVPYYCFHDVDVSPEGASLKEYLNNFAQMVDYLGEKQQQSGVKLLWGTANCFTNPRYGAGAATNPDPEVFSWAATQVVTAMNATHKLGGENYVLWGGREGYETLLNTDLRQEREQIGRFMQMVVEHKHKIGFRGTLLIEPKPQEPTKHQYDYDVATVYGFLKQFGLEKEIKVNIEANHATLAGHSFHHEIASAIALGIFGSVDANRGDPQLGWDTDQFPISVEENALVMYEIIKAGGFTTGGLNFDAKVRRQSTDKYDLFYGHIGAMDTMALALKVAARMIEDGELDKRVAKRYAGWNSELGQQILKGQLSLAEIAKYAEQHSLAPSHQSGHQELLENLVNHYLFDK.

Catalysis depends on residues His-101 and Asp-104. Residues Glu-232, Glu-268, His-271, Asp-296, Asp-307, Asp-309, and Asp-339 each contribute to the Mg(2+) site.

This sequence belongs to the xylose isomerase family. Homotetramer. Mg(2+) is required as a cofactor.

It is found in the cytoplasm. The enzyme catalyses alpha-D-xylose = alpha-D-xylulofuranose. This is Xylose isomerase from Enterobacter sp. (strain 638).